Reading from the N-terminus, the 528-residue chain is Autophagy-related protein 22 (528 aa).

Over 1–98 (MSYGTINDMN…IFVDTSSFAL (98 aa)) the chain is Cytoplasmic. A helical transmembrane segment spans residues 99–119 (YVFSLSVLFQTIIVISVSGIV). The Vacuolar segment spans residues 120–130 (DLWGSVKFKGR). A helical membrane pass occupies residues 131–151 (ILVWFGIVGALSTVAISKLND). The Cytoplasmic segment spans residues 152–153 (TQ). The helical transmembrane segment at 154-174 (IYSLAGLYIVANGCFGVINVV) threads the bilayer. The Vacuolar segment spans residues 175–210 (GNSLLPIFVKDSLKCQSQGAYEPDKVDSLTTVISGR). The helical transmembrane segment at 211 to 231 (GASLGYSSALIVQIVSMFLVA) threads the bilayer. The Cytoplasmic portion of the chain corresponds to 232-241 (SKKGSKQDVQ). Residues 242–262 (VAVLFVGIWWFVWQLPMIWLI) traverse the membrane as a helical segment. At 263–318 (DDVTIPIRVDDSTLASARSPYPGEQDALGQLNWKNYLSYGWVSLFESFKHARLLKD) the chain is on the vacuolar side. Position 278 is a phosphoserine (serine 278). Residues 319–339 (VMIFLIAWFIISDSITTINST) traverse the membrane as a helical segment. Topologically, residues 340–352 (AVLFSKAELHMST) are cytoplasmic. The chain crosses the membrane as a helical span at residues 353–373 (LNLIMISVLTVVNAMLGAFMI). Topologically, residues 374–388 (PQFLATKFRWTSSQT) are vacuolar. Residues 389–409 (LMYIIIWASFIPFYGILGFFF) traverse the membrane as a helical segment. Residues 410–417 (NAFGLKHK) lie on the Cytoplasmic side of the membrane. A helical transmembrane segment spans residues 418–438 (FEMFLLAIWYGLSLGGLSAVS). Over 439–485 (RSVFSLIVPPGKESTFFSMFSITDKGSSILGPFLVGLLTDKTHNIRY) the chain is Vacuolar. A helical transmembrane segment spans residues 486 to 506 (SFYFFFLLLMLSLPVLNCLDV). Residues 507–528 (KRGRREAEELSQVLPESERRLD) are Cytoplasmic-facing.

This sequence belongs to the ATG22 family.

Its subcellular location is the vacuole membrane. Its function is as follows. Vacuolar effluxer which mediate the efflux of leucine and other amino acids resulting from autophagic degradation. The release of autophagic amino acids allows the maintenance of protein synthesis and viability during nitrogen starvation. This chain is Autophagy-related protein 22 (ATG22), found in Saccharomyces cerevisiae (strain ATCC 204508 / S288c) (Baker's yeast).